Consider the following 272-residue polypeptide: 3-methyl-2-oxobutanoate hydroxymethyltransferase (272 aa).

Positions 42 and 86 each coordinate Mg(2+). 3-methyl-2-oxobutanoate contacts are provided by residues 42–43, D86, and K116; that span reads DS. E118 lines the Mg(2+) pocket. E185 acts as the Proton acceptor in catalysis. The disordered stretch occupies residues 251-272; that stretch reads LKEQRDQRATPTTPPPPPAPDC. Residues 262-272 show a composition bias toward pro residues; sequence TTPPPPPAPDC.

It belongs to the PanB family. As to quaternary structure, homodecamer; pentamer of dimers. It depends on Mg(2+) as a cofactor.

It localises to the cytoplasm. It catalyses the reaction 3-methyl-2-oxobutanoate + (6R)-5,10-methylene-5,6,7,8-tetrahydrofolate + H2O = 2-dehydropantoate + (6S)-5,6,7,8-tetrahydrofolate. It functions in the pathway cofactor biosynthesis; (R)-pantothenate biosynthesis; (R)-pantoate from 3-methyl-2-oxobutanoate: step 1/2. Catalyzes the reversible reaction in which hydroxymethyl group from 5,10-methylenetetrahydrofolate is transferred onto alpha-ketoisovalerate to form ketopantoate. The protein is 3-methyl-2-oxobutanoate hydroxymethyltransferase of Synechococcus sp. (strain CC9311).